Reading from the N-terminus, the 44-residue chain is SPbeta prophage-derived uncharacterized protein YosI (44 aa).

The chain is SPbeta prophage-derived uncharacterized protein YosI (yosI) from Bacillus subtilis (strain 168).